Reading from the N-terminus, the 558-residue chain is Phosphatidylserine lipase ABHD16A (558 aa).

A run of 2 helical transmembrane segments spans residues 60–80 (ILAL…FAFF) and 93–113 (VVPF…VACL). At 114 to 558 (RGIGRWTNPQ…AQHFQMPWHL (445 aa)) the chain is on the cytoplasmic side. The AB hydrolase-1 domain occupies 281–406 (LVICCEGNAG…ALVTRTVRQH (126 aa)). Residues S355, D430, and H507 each act as charge relay system in the active site.

Belongs to the AB hydrolase superfamily. ABHD16 family.

It localises to the membrane. The enzyme catalyses 1-heptadecanoyl-2-(5Z,8Z,11Z,14Z-eicosatetraenoyl)-sn-glycero-3-phosphoserine + H2O = 1-heptadecanoyl-sn-glycero-3-phosphoserine + (5Z,8Z,11Z,14Z)-eicosatetraenoate + H(+). It carries out the reaction 1-hexadecanoyl-2-(9Z-octadecenoyl)-sn-glycero-3-phospho-L-serine + H2O = 1-hexadecanoyl-sn-glycero-3-phospho-L-serine + (9Z)-octadecenoate + H(+). It catalyses the reaction 1-octadecanoyl-2-(9Z,12Z-octadecadienoyl)-sn-glycero-3-phosphoserine + H2O = 1-octadecanoyl-sn-glycero-3-phosphoserine + (9Z,12Z)-octadecadienoate + H(+). The catalysed reaction is 1-heptadecanoyl-2-(5Z,8Z,11Z,14Z-eicosatetraenoyl)-sn-glycero-3-phosphocholine + H2O = 1-heptadecanoyl-sn-glycero-3-phosphocholine + (5Z,8Z,11Z,14Z)-eicosatetraenoate + H(+). The enzyme catalyses 1-hexadecanoyl-2-(9Z-octadecenoyl)-sn-glycero-3-phosphoglycerol + H2O = 1-hexadecanoyl-sn-glycero-3-phosphoglycerol + (9Z)-octadecenoate + H(+). It carries out the reaction 1-hexadecanoyl-2-(9Z-octadecenoyl)-sn-glycero-3-phospho-(1D-myo-inositol) + H2O = 1-hexadecanoyl-sn-glycero-3-phospho-(1D-myo-inositol) + (9Z)-octadecenoate + H(+). It catalyses the reaction 1-heptadecanoyl-2-(5Z,8Z,11Z,14Z-eicosatetraenoyl)-sn-glycero-3-phosphoethanolamine + H2O = 1-heptadecanoyl-sn-glycero-3-phosphoethanolamine + (5Z,8Z,11Z,14Z)-eicosatetraenoate + H(+). The catalysed reaction is 1-hexadecanoyl-2-(9Z-octadecenoyl)-sn-glycero-3-phospho-(1'-sn-glycerol) + H2O = 1-hexadecanoyl-sn-glycero-3-phospho-(1'-sn-glycerol) + (9Z)-octadecenoate + H(+). The enzyme catalyses Hydrolyzes glycerol monoesters of long-chain fatty acids.. It carries out the reaction 1-tetradecanoylglycerol + H2O = tetradecanoate + glycerol + H(+). It catalyses the reaction 2-hexadecanoylglycerol + H2O = glycerol + hexadecanoate + H(+). The catalysed reaction is 1-(9Z-octadecenoyl)-glycerol + H2O = glycerol + (9Z)-octadecenoate + H(+). The enzyme catalyses 2-(9Z-octadecenoyl)-glycerol + H2O = glycerol + (9Z)-octadecenoate + H(+). It carries out the reaction 2-(9Z,12Z-octadecadienoyl)-glycerol + H2O = (9Z,12Z)-octadecadienoate + glycerol + H(+). It catalyses the reaction 1-(5Z,8Z,11Z,14Z-eicosatetraenoyl)-glycerol + H2O = glycerol + (5Z,8Z,11Z,14Z)-eicosatetraenoate + H(+). The catalysed reaction is 2-(5Z,8Z,11Z,14Z-eicosatetraenoyl)-glycerol + H2O = glycerol + (5Z,8Z,11Z,14Z)-eicosatetraenoate + H(+). The enzyme catalyses prostaglandin D2-1-glycerol ester + H2O = prostaglandin D2 + glycerol + H(+). It carries out the reaction 2-glyceryl-15-deoxy-Delta(12,14)-prostaglandin J2 + H2O = 15-deoxy-Delta(12,14)-prostaglandin J2 + glycerol + H(+). It catalyses the reaction 1-(9Z,12Z-octadecadienoyl)-glycerol + H2O = (9Z,12Z)-octadecadienoate + glycerol + H(+). Specifically inhibited by alpha-alkylidene-beta-lactone KC01 ((Z)-6-(2-Oxo-4-tridecyloxetan-3-ylidene)hexanamide). Functionally, phosphatidylserine (PS) lipase that mediates the hydrolysis of phosphatidylserine to generate lysophosphatidylserine (LPS). LPS constitutes a class of signaling lipids that regulates immunological and neurological processes. Has no activity towards diacylglycerol, triacylglycerol or lysophosphatidylserine lipase. Also has monoacylglycerol lipase activity, with preference for 1-(9Z,12Z-octadecadienoyl)-glycerol (1-LG) and 2-glyceryl-15-deoxy-Delta(12,14)-prostaglandin J2 (15d-PGJ(2)-G). The sequence is that of Phosphatidylserine lipase ABHD16A from Mus musculus (Mouse).